Consider the following 65-residue polypeptide: Large ribosomal subunit protein bL35 (65 aa).

The protein belongs to the bacterial ribosomal protein bL35 family.

This is Large ribosomal subunit protein bL35 from Yersinia pseudotuberculosis serotype O:1b (strain IP 31758).